Here is an 89-residue protein sequence, read N- to C-terminus: Small ribosomal subunit protein bS18 (89 aa).

Belongs to the bacterial ribosomal protein bS18 family. Part of the 30S ribosomal subunit. Forms a tight heterodimer with protein bS6.

Its function is as follows. Binds as a heterodimer with protein bS6 to the central domain of the 16S rRNA, where it helps stabilize the platform of the 30S subunit. This Treponema denticola (strain ATCC 35405 / DSM 14222 / CIP 103919 / JCM 8153 / KCTC 15104) protein is Small ribosomal subunit protein bS18.